Here is a 421-residue protein sequence, read N- to C-terminus: Histone-lysine N-methyltransferase SUV39H1 (421 aa).

In terms of domain architecture, Chromo spans 46–104; it reads FEVEYLWNYKKVQDQELYLVKWKYYPDSESTWEPRHHLKCNNLLKQFHLDLERELLRRA. The 61-residue stretch at 189-249 folds into the Pre-SET domain; sequence AGCKCRDCFS…SCPNRVVQKG (61 aa). The Zn(2+) site is built by Cys-191, Cys-193, Cys-196, Cys-203, Cys-204, Cys-231, Cys-235, Cys-237, and Cys-241. The region spanning 252–375 is the SET domain; that stretch reads YKFCIFRTSD…TGEELTFDYN (124 aa). Residues 263 to 265, Tyr-306, and 332 to 333 contribute to the S-adenosyl-L-methionine site; these read RGW and NH. Cys-335, Cys-409, Cys-411, and Cys-416 together coordinate Zn(2+). Residues 405–421 form the Post-SET domain; that stretch reads VRVECKCGVSSCRKYLF.

Belongs to the class V-like SAM-binding methyltransferase superfamily. Histone-lysine methyltransferase family. Suvar3-9 subfamily.

It is found in the nucleus. The protein localises to the chromosome. It localises to the centromere. It catalyses the reaction L-lysyl(9)-[histone H3] + 3 S-adenosyl-L-methionine = N(6),N(6),N(6)-trimethyl-L-lysyl(9)-[histone H3] + 3 S-adenosyl-L-homocysteine + 3 H(+). In terms of biological role, histone methyltransferase that specifically trimethylates 'Lys-9' of histone H3 using monomethylated H3 'Lys-9' as substrate. H3 'Lys-9' trimethylation represents a specific tag for epigenetic transcriptional repression by recruiting HP1 (CBX1, CBX3 and/or CBX5) proteins to methylated histones. Mainly functions in heterochromatin regions, thereby playing a central role in the establishment of constitutive heterochromatin at pericentric and telomere regions. H3 'Lys-9' trimethylation is also required to direct DNA methylation at pericentric repeats. SUV39H1 is targeted to histone H3 via its interaction with RB1 and is involved in many processes. The polypeptide is Histone-lysine N-methyltransferase SUV39H1 (suv39h1) (Xenopus laevis (African clawed frog)).